A 463-amino-acid polypeptide reads, in one-letter code: Bifunctional protein HldE (463 aa).

A ribokinase region spans residues 1-311; that stretch reads MKQILVVGDL…EEIALILNQT (311 aa). An ATP-binding site is contributed by 191–194; it reads NRIE. Residue Asp260 is part of the active site. Positions 334-463 are cytidylyltransferase; sequence FTNGCFDILH…IERIKRTCND (130 aa).

In the N-terminal section; belongs to the carbohydrate kinase PfkB family. It in the C-terminal section; belongs to the cytidylyltransferase family. Homodimer.

It catalyses the reaction D-glycero-beta-D-manno-heptose 7-phosphate + ATP = D-glycero-beta-D-manno-heptose 1,7-bisphosphate + ADP + H(+). It carries out the reaction D-glycero-beta-D-manno-heptose 1-phosphate + ATP + H(+) = ADP-D-glycero-beta-D-manno-heptose + diphosphate. The protein operates within nucleotide-sugar biosynthesis; ADP-L-glycero-beta-D-manno-heptose biosynthesis; ADP-L-glycero-beta-D-manno-heptose from D-glycero-beta-D-manno-heptose 7-phosphate: step 1/4. Its pathway is nucleotide-sugar biosynthesis; ADP-L-glycero-beta-D-manno-heptose biosynthesis; ADP-L-glycero-beta-D-manno-heptose from D-glycero-beta-D-manno-heptose 7-phosphate: step 3/4. In terms of biological role, catalyzes the phosphorylation of D-glycero-D-manno-heptose 7-phosphate at the C-1 position to selectively form D-glycero-beta-D-manno-heptose-1,7-bisphosphate. Its function is as follows. Catalyzes the ADP transfer from ATP to D-glycero-beta-D-manno-heptose 1-phosphate, yielding ADP-D-glycero-beta-D-manno-heptose. This is Bifunctional protein HldE from Helicobacter pylori (strain Shi470).